The primary structure comprises 569 residues: Paxillin-B (569 aa).

The short motif at aspartate 10–leucine 18 is the LD motif 1 element. Positions glutamine 62–asparagine 78 are enriched in polar residues. The segment at glutamine 62–isoleucine 103 is disordered. Residues threonine 79–glutamine 102 show a composition bias toward low complexity. Positions leucine 106–leucine 112 match the LD motif 2 motif. Positions threonine 129–leucine 311 are disordered. The segment covering asparagine 150–serine 161 has biased composition (low complexity). 2 stretches are compositionally biased toward polar residues: residues arginine 162–lysine 188 and threonine 196–tyrosine 206. Over residues serine 207–proline 217 the composition is skewed to low complexity. The LD motif 3 motif lies at leucine 232–leucine 239. Basic residues predominate over residues histidine 258–proline 272. The span at asparagine 273 to asparagine 301 shows a compositional bias: low complexity. Residues leucine 311–leucine 318 carry the LD motif 4 motif. LIM zinc-binding domains follow at residues glycine 334 to phenylalanine 391, alanine 393 to valine 452, arginine 453 to glycine 510, and serine 511 to alanine 569.

It belongs to the paxillin family. In terms of tissue distribution, expressed in the upper and lower cup of the fruiting body.

The protein localises to the cytoplasm. It is found in the cell cortex. Its subcellular location is the cell projection. The protein resides in the filopodium. It localises to the cell junction. The protein localises to the focal adhesion. It is found in the cytoskeleton. Functionally, required for cell-substrate adhesion, cell sorting, slug migration, and cell differentiation. May function upstream of limB. In Dictyostelium discoideum (Social amoeba), this protein is Paxillin-B (paxB).